Here is a 107-residue protein sequence, read N- to C-terminus: MMKVLVVVALLVTLISYSSSEGIDDLEADELLSLMANEQTRKECIPKHHECTSNKHGCCRGNFFKYKCQCTTVVTQDGEQTERCFCGTPPHHMAAELVVGFGKKIFG.

The first 20 residues, 1–20 (MMKVLVVVALLVTLISYSSS), serve as a signal peptide directing secretion. The propeptide occupies 21-41 (EGIDDLEADELLSLMANEQTR). 4 disulfides stabilise this stretch: Cys-44–Cys-59, Cys-51–Cys-68, Cys-58–Cys-86, and Cys-70–Cys-84.

The protein belongs to the neurotoxin 19 (CSTX) family. 04 (U1-Lctx) subfamily. As to expression, expressed by the venom gland.

It is found in the secreted. The sequence is that of U1-lycotoxin-Ls1q from Lycosa singoriensis (Wolf spider).